The chain runs to 2878 residues: MDGRDFGPQRSVHGPPPPLLSGLAMDSHRVGAATAGRLPSSGLPGPPPPGKYMAGLNLHPHPGFSHLPSGLYPSYLHLNHLDPPSSGSPLLSQLGQPSIFDTQKDGFYLPAPGTLHAHTPSSRTPSGHSSGGPAKGSSREGTGKDRAGRGGDPPPLFGKKDPRAREEVSGPRGVVDLTQEARAEGRQDRGSSRLAERLSPFLAEVKAKGALQPSALSLCNGVVDAGLVAELGRGGAKEVARQEENARLLRRAEALLPAARPCGSPLPPPPPLPPKGPPAPPSSTPAGVYTVFREPGREHRVVAPTFVPSVEAFDERVGPIQIASQARDVRAREREPGRPGVLQGPPGSPRLERPEVLREKSSVIRSLKRPPPSDGPPAARSSRSSPDARAYLPPKELLKPEADPRPCERAPRGPSASAAQQAAKLFGLEPSRPPGPEHKWKPFELGNFATTQMAVLAAQHHHASRAEEEAAVATASKKAYLDPGGAMPRASATCGRPGADLHSAAHGPGEASAMQSLIKYSGSFAREAVAVRPGGCGKKSPFGGLGTMKPEPTPTSAGPPRAQARLTHPGVPTAGGGRQLKRDPERPESAKAFGREGSGAQGEAEVRHPPVGIAVAVARQKDSGSSSRLGPGLGDQERTLSLNNVKGHGRTDDECDRARHREDRLLGTRLDRDQEKLLRESKELADLARLHPTSCAPNGLNPNLMVTGGPTLAGSGRWSADPAAHLATNPWLPRSGSTSMWLAGHPYGLGPPSLHQGMAPAFPPGLGGSLPSAYQFVRDPQSGQLVVIPSDHLPHFAELMERAAVPPLWPALYPPGRSPLHHAQQLQLFSQQHFLRQQELLYLQQQAAQALELQRSAQLVERLKAQEHRTEMEEKISKRSLETTGKAGLSAAGPGLLPRKSAGLANGPAGSHGKAVSPPPSPRASPVTSLKAKVIQKVEDVSKPPAYTYPATPSSHPSSPPPASPPPTPGLTRKEEAPENVVEKKDLELEKETPSPFQALFTDIPPRYPFQALPPHYGRPYPFLLQPAAASDADGLAPDVPLPADGPERLALSPEDKPICLSPSKIPEPPRDSPEEEQLADREVKAEVEDIEEGPTELPPLESPLALPVPETMVAVSPAGGCGGSPLEAQALSTAGPGCREPSEVSDFAQVAEPQIELPSKTEHRMTALELGTQLTPEPLVETKEEPVEVPLDVPMEEPTTEAGPEDSLPQPSLTEPQPSLELSDCDLPVPEGQCLNLEAQEAVPAPASTCYLEETHSESLLPGLDDPLAGMNALAAAAELPQARPLPSLGPGVPAGEKLDTAPSLVLEHSFLQGITLLSEIAELELDRRGQEAADPEPNLVVRPSLESLLAASSHMLKEVLESPFSDPLKNLRLPRELNSNKKYSWMQKKEERMFAMKSSLEDMDALELDFRMRLAEVQRRYKEKQRELVKLQRRRDSGDRHEDAHRSLARRGPGRPRKRTHTLSALSPPCKRKSHSSSGKGLSSKSLLTSDDYDLGAGIRKRHKGPEEEQEALMGMGKARSRNQSWDDHDSSSDFMSQLKIKKKKMASDQEQLASKLDRALSLTKQDKLKSPFKFSDGPGGKPKTGGGCGRFLTQYDSLLGKDRKALAKGLGLSLKPSREGKHKRASKARKMEGGFQARGQPKSVHSPFASEVSSQSYNTDSDEDEDFLKNEWSAQGPSSSKLTSSLLCGMVPKNSKPATGPKLTKRGLAGPRTLKPKVVTSRKQSFCLLLREAEARSSFSDSSEEDSFDQDDSSEEEEEELEEEEEDEEEEGIGSYRLGAGEQALSPSLEESGLGLLARFAASALPSPVVGPPLSVVQLEAEQKARKKEERQSLLGTEFEYTDSESEVKVPKQSAAGLLRTKKGVGEPGQSLAAPGPGSRASGPSSPDKAKLVSEKGRKARKIRGPKEPGFEAGPEASDDDLWTRRRSERIFLHDASAAVQATSNTAPATKPSRCGRGGAPSPRKDTGRAKDRKDPRKKKRGKEAGSAATLPPPRVSTLPDSRAPHPGALATAKRSKAKARGKEAKKENRGKGGAVSKLMECMAAEEDFEANQDSSFSEDEHLPRGGATERPLTPAPRSCIIDKEELKDGLRVLIPLDDKLLYAGHVQTVHSPDIYRVVVEGERGNRPHIYCLEQLLQEAIIDVRPASTRFLPQGTRIAAYWSQQYRCLYPGTVVRGLLDLEDDGDLITVEFDDGDTGRIPLSHIRLLPPDYKIQCAEPSPALLVPSAKRRSRKTSKDTGEVKEGAATGPQEATGGKARGRGRKPSTKAKADRAVVLEEGAATNEVPSAPLALEPISTPNSKKSTPEPVDKRARAPKARSISAQPSPVPPTFSSCPAPEPFGELPTPATAPLVTMPVTMPATRPKPKKARAAEGSGAKGPRRPGEDDELLVKLDHEGVMSPKSKKAKEALLLREDPGPGGWPESTGLLSLGSYSPAVGSSEPKATWPKGLDGDLTQEPGPGLPLEDPGNSKNPDKAQAEQDGAEESETTSSSSSSSSSSSSSSSSSSSSSSSSSGSETEGEEDAEKNREDGRGAGGRTCSAASSRASSPASSSSSSSSSSSSSSSSSSSSSSSSTTDEDSSCSSDEEAAPAPAAGPSTQPALPTKVSKPPSKARSSAHSPGKKAPTTTQPPPQPPPQPQQTLQPKTQAGAGAKSRPKKREGVHLPTTKELAKRQRLPSVENRPKIAAFLPARQLWKWFGKPTQRRGMKGKARKLFYKAIVRGKEMIRIGDCAVFLSAGRPNLPYIGRIQSMWESWGNNMVVRVKWFYHPEETSPGKQFHEGQHWDQKSGHSLPAALRASSQRKDFMERALYQSSHVDENDVQTVSHKCLVVGLEQYEQMLKTKKYQDSEGLYYLAGTYEPTTGMIFSTDGVPVLC.

2 disordered regions span residues 1–54 (MDGR…KYMA) and 102–194 (TQKD…SSRL). Positions 119-128 (TPSSRTPSGH) are enriched in polar residues. Composition is skewed to basic and acidic residues over residues 137 to 149 (SSRE…RAGR), 158 to 169 (GKKDPRAREEVS), and 179 to 194 (QEAR…SSRL). Ser-199 carries the post-translational modification Phosphoserine. Disordered regions lie at residues 259–289 (ARPC…AGVY), 313–442 (FDER…KWKP), 487–507 (MPRA…AAHG), 540–655 (SPFG…DDEC), 865–1002 (AQEH…ALFT), 1033–1104 (ADGL…LESP), 1127–1146 (LEAQ…SEVS), 1171–1228 (LGTQ…DCDL), 1429–1535 (ELVK…DSSS), 1613–1668 (LGLS…DEDE), 1694–1718 (VPKN…RTLK), and 1737–1787 (EARS…GEQA). Pro residues predominate over residues 264–283 (SPLPPPPPLPPKGPPAPPSS). Composition is skewed to basic and acidic residues over residues 327 to 337 (RDVRAREREPG) and 350 to 362 (RLER…EKSS). Over residues 376–390 (PPAARSSRSSPDARA) the composition is skewed to low complexity. Basic and acidic residues predominate over residues 396–411 (ELLKPEADPRPCERAP). Phosphoserine is present on Ser-540. Residue Lys-549 forms a Glycyl lysine isopeptide (Lys-Gly) (interchain with G-Cter in SUMO2) linkage. Composition is skewed to basic and acidic residues over residues 580-589 (LKRDPERPES) and 865-881 (AQEH…KRSL). The span at 958–969 (SSPPPASPPPTP) shows a compositional bias: pro residues. The span at 972-993 (TRKEEAPENVVEKKDLELEKET) shows a compositional bias: basic and acidic residues. A phosphoserine mark is found at Ser-1053 and Ser-1062. The segment covering 1068–1088 (EPPRDSPEEEQLADREVKAEV) has biased composition (basic and acidic residues). A coiled-coil region spans residues 1410-1442 (LDFRMRLAEVQRRYKEKQRELVKLQRRRDSGDR). The segment covering 1429–1448 (ELVKLQRRRDSGDRHEDAHR) has biased composition (basic and acidic residues). Positions 1449–1463 (SLARRGPGRPRKRTH) are enriched in basic residues. Ser-1469 bears the Phosphoserine mark. Positions 1478–1492 (SSSGKGLSSKSLLTS) are enriched in low complexity. Over residues 1745–1775 (SSEEDSFDQDDSSEEEEEELEEEEEDEEEEG) the composition is skewed to acidic residues. A phosphoserine mark is found at Ser-1789 and Ser-1795. A compositionally biased stretch (basic and acidic residues) spans 1825–1835 (EQKARKKEERQ). 3 disordered regions span residues 1825 to 2040 (EQKA…GAVS), 2052 to 2080 (FEAN…TPAP), and 2226 to 2681 (LLVP…RLPS). Over residues 1876–1890 (AAPGPGSRASGPSSP) the composition is skewed to low complexity. 4 stretches are compositionally biased toward basic and acidic residues: residues 1891–1900 (DKAKLVSEKG), 1925–1936 (LWTRRRSERIFL), 1966–1978 (PRKD…DRKD), and 2024–2034 (RGKEAKKENRG). Thr-2077 bears the Phosphothreonine mark. Over residues 2238-2247 (TSKDTGEVKE) the composition is skewed to basic and acidic residues. Positions 2261 to 2270 (ARGRGRKPST) are enriched in basic residues. Composition is skewed to basic and acidic residues over residues 2307 to 2316 (STPEPVDKRA) and 2409 to 2419 (AKEALLLREDP). Low complexity-rich tracts occupy residues 2460–2470 (EPGPGLPLEDP), 2491–2520 (TTSS…SGSE), and 2540–2578 (RTCS…SSST). Acidic residues predominate over residues 2579–2591 (TDEDSSCSSDEEA). Positions 2631–2641 (TQPPPQPPPQP) are enriched in pro residues. Ser-2681 carries the phosphoserine modification. Residues 2727 to 2872 (EMIRIGDCAV…PTTGMIFSTD (146 aa)) form the BAH domain.

The sequence is that of Trinucleotide repeat-containing gene 18 protein (Tnrc18) from Mus musculus (Mouse).